Reading from the N-terminus, the 103-residue chain is Large ribosomal subunit protein bL21 (103 aa).

It belongs to the bacterial ribosomal protein bL21 family. In terms of assembly, part of the 50S ribosomal subunit. Contacts protein L20.

This protein binds to 23S rRNA in the presence of protein L20. This chain is Large ribosomal subunit protein bL21, found in Thiobacillus denitrificans (strain ATCC 25259 / T1).